The chain runs to 769 residues: MSTSVEPNETEALLRKQNDLSTTASIEEKYPHQQGEAAEDDDDTLKRTQYDEAKETAESLKQVESILAPIVFTALSFFVRFYRISVNDHVVWDEAHFGKFGSYYLRHEFYHDVHPPLGKMLVGLSGYLAGYNGSWDFPSGEKYPDYIDYTKMRLFNATFSALCVPLAYFTGKEVGFSMFTTWLFTLMVALESSYVTLGKFILLDSMLLFFTVATVFCFSRFNNFNNKSQEFSRKWWKWILLTGVSIGCTCSVKMVGLFVTTLVGIYTVVDLWNKLSDKSISWTKYIQHWFARIVALILVPIFIFMLSFKVHFDLLYKSGTGDANMSSLFQANLAGSDVGGGPREVSMFHSVITLKNQGLSGGLLHSHVQTFPEGSKQQQVTTYGHKDSNNNWIFQRARGQPYYDTSGNTTDIEYIFDGMHVRLMHPQTGRNLHTHDIPAPVSKSEYEVACYGNLTIGDPKDNWTVEIMEQASDEDKMRLHPLTSSFRLKNEVMNCYLGVTGTTLPQWGFRQGEVVCYKNPFKKDKRTWWNIENNRNAVLPPAPEDFKLPKTKFIRDFIQLNLAMMATNNALVPDTEKQDDLASSFWQWPTLNVGIRMCGWGPENPKYYMIGSPATTWTSTVGVILFAFIVLYYLIRWQRQYVDFPSTNPHKLKLFLMGGIYPMFGWGLHFLPFAIMGRVTYVHHYVPALYFAMLVFCYEVESFSSRLNKPNASPVSKLLYLAIYIGLLSLVAGTFWYFRYLSWGMEGPKEDWKHLKLLESWRVSDDQYT.

Positions 1-44 (MSTSVEPNETEALLRKQNDLSTTASIEEKYPHQQGEAAEDDDDT) are disordered. The N-linked (GlcNAc...) asparagine glycan is linked to Asn-8. A helical transmembrane segment spans residues 59-79 (SLKQVESILAPIVFTALSFFV). The N-linked (GlcNAc...) asparagine glycan is linked to Asn-132. The next 3 membrane-spanning stretches (helical) occupy residues 152 to 169 (MRLFNATFSALCVPLAYF), 176 to 194 (FSMFTTWLFTLMVALESSY), and 200 to 218 (FILLDSMLLFFTVATVFCF). Asn-226 is a glycosylation site (N-linked (GlcNAc...) asparagine). 2 helical membrane passes run 252-272 (VKMVGLFVTTLVGIYTVVDLW) and 288-308 (HWFARIVALILVPIFIFMLSF). N-linked (GlcNAc...) asparagine glycosylation occurs at Asn-324. One can recognise an MIR 1 domain in the interval 342–397 (PREVSMFHSVITLKNQGLSGGLLHSHVQTFPEGSKQQQVTTYGHKDSNNNWIFQRA). N-linked (GlcNAc...) asparagine glycosylation is found at Asn-408, Asn-453, and Asn-462. 2 MIR domains span residues 412–468 (IEYI…VEIM) and 474–534 (EDKM…IENN). 4 helical membrane-spanning segments follow: residues 615–635 (TTWTSTVGVILFAFIVLYYLI), 655–675 (FLMGGIYPMFGWGLHFLPFAI), 679–699 (VTYVHHYVPALYFAMLVFCYE), and 718–738 (LLYLAIYIGLLSLVAGTFWYF).

The protein belongs to the glycosyltransferase 39 family. In terms of assembly, PMT1 and PMT2 form a functional heterodimer.

The protein localises to the endoplasmic reticulum membrane. It carries out the reaction a di-trans,poly-cis-dolichyl beta-D-mannosyl phosphate + L-seryl-[protein] = 3-O-(alpha-D-mannosyl)-L-seryl-[protein] + a di-trans,poly-cis-dolichyl phosphate + H(+). The enzyme catalyses a di-trans,poly-cis-dolichyl beta-D-mannosyl phosphate + L-threonyl-[protein] = 3-O-(alpha-D-mannosyl)-L-threonyl-[protein] + a di-trans,poly-cis-dolichyl phosphate + H(+). The protein operates within protein modification; protein glycosylation. Its function is as follows. Protein mannosyltransferase (PMT) involved in hyphal growth and drug sensitivity. Transfers mannose from Dol-P-mannose to Ser or Thr residues on proteins. PMT1, PMT2 and PMT4 account for most of the protein-O-glycosylation activity, while PMT5 and PMT6 may specifically modulate a much narrower spectrum of target proteins. Essential protein that plays an important role in virulence. The chain is Dolichyl-phosphate-mannose--protein mannosyltransferase 2 from Candida albicans (strain SC5314 / ATCC MYA-2876) (Yeast).